The sequence spans 309 residues: Tagatose-6-phosphate kinase 1 (309 aa).

It belongs to the carbohydrate kinase PfkB family. LacC subfamily.

The catalysed reaction is D-tagatofuranose 6-phosphate + ATP = D-tagatofuranose 1,6-bisphosphate + ADP + H(+). Its pathway is carbohydrate metabolism; D-tagatose 6-phosphate degradation; D-glyceraldehyde 3-phosphate and glycerone phosphate from D-tagatose 6-phosphate: step 1/2. The polypeptide is Tagatose-6-phosphate kinase 1 (Streptococcus agalactiae serotype III (strain NEM316)).